A 311-amino-acid chain; its full sequence is Homeobox-leucine zipper protein HOX1 (311 aa).

Disordered stretches follow at residues 29 to 69 (AGGA…SDHR) and 97 to 160 (AETT…KKLR). Positions 119 to 145 (SSPNSTLSSLSGKRGAPSAATAAAAAA) are enriched in low complexity. Positions 154-213 (GSRKKLRLSKDQAAVLEDTFKEHNTLNPKQKAALARQLNLKPRQVEVWFQNRRARTKLKQ) form a DNA-binding region, homeobox. The segment at 212 to 256 (KQTEVDCELLKRCCETLTDENRRLHRELQELRALKLATAAAAPHH) is leucine-zipper. The interval 279–311 (SAATTTRNNSGAAPARPVPTRPWPPAAAQRSSA) is disordered. A compositionally biased stretch (polar residues) spans 280-289 (AATTTRNNSG). Over residues 294–303 (RPVPTRPWPP) the composition is skewed to pro residues.

Belongs to the HD-ZIP homeobox family. Class II subfamily. In terms of assembly, homodimer. May form a heterodimer with HOX2, HOX3 or HOX7. Expressed in root provascular and vascular cylinder, provascular and vascular strands of leaves, provascular and vascular strands of the whole panicle, in mature embryo provascular bundles of scutellum and embryonic axis and provascular and vascular strands of young immature spikelet organs. Expressed in differentiating and differentiated xylem and phloem elements, and in outer and inner bundle sheath cells of all vascular bundles. Expressed in auricles, ligules, culm, guard cells brac hairs and pollen.

It localises to the nucleus. Functionally, probable transcription repressor involved leaf development. Binds to the DNA sequence 5'-CAAT[GC]ATTG-3'. May act as a regulatory switch to specify provascular cell fate. The sequence is that of Homeobox-leucine zipper protein HOX1 (HOX1) from Oryza sativa subsp. indica (Rice).